Consider the following 25-residue polypeptide: Caerin-1.7 (25 aa).

Position 25 is a leucine amide (Leu25).

Belongs to the frog skin active peptide (FSAP) family. Caerin subfamily. Caerin-1.7.1 does not have any antibacterial activity. In terms of tissue distribution, expressed by the skin dorsal glands.

It localises to the secreted. Its function is as follows. Antibacterial peptide, that adopts an alpha helical conformation which can disrupt bacterial membranes. Each caerin displays a different antimicrobial specificity. In Ranoidea xanthomera (Northern orange-eyed tree frog), this protein is Caerin-1.7.